The primary structure comprises 330 residues: Phosphate acyltransferase (330 aa).

The protein belongs to the PlsX family. In terms of assembly, homodimer. Probably interacts with PlsY.

The protein localises to the cytoplasm. The catalysed reaction is a fatty acyl-[ACP] + phosphate = an acyl phosphate + holo-[ACP]. Its pathway is lipid metabolism; phospholipid metabolism. Its function is as follows. Catalyzes the reversible formation of acyl-phosphate (acyl-PO(4)) from acyl-[acyl-carrier-protein] (acyl-ACP). This enzyme utilizes acyl-ACP as fatty acyl donor, but not acyl-CoA. In Bacillus licheniformis (strain ATCC 14580 / DSM 13 / JCM 2505 / CCUG 7422 / NBRC 12200 / NCIMB 9375 / NCTC 10341 / NRRL NRS-1264 / Gibson 46), this protein is Phosphate acyltransferase.